A 394-amino-acid chain; its full sequence is [Pyruvate dehydrogenase (acetyl-transferring)] kinase 1, mitochondrial (394 aa).

The N-terminal 20 residues, 1 to 20, are a transit peptide targeting the mitochondrion; that stretch reads MWKIMRSWKCGGMRWAHRQR. A Histidine kinase domain is found at 126–386; it reads AYPYELHNPP…DVYIKLKGPS (261 aa). H148 is subject to Phosphohistidine; by autocatalysis. ATP contacts are provided by residues 267-274, D304, 323-324, and 347-352; these read EVFKNAFE, ST, and GMGFGL.

It belongs to the PDK/BCKDK protein kinase family. In terms of assembly, interacts with PKP2.

Its subcellular location is the mitochondrion matrix. It catalyses the reaction L-seryl-[pyruvate dehydrogenase E1 alpha subunit] + ATP = O-phospho-L-seryl-[pyruvate dehydrogenase E1 alpha subunit] + ADP + H(+). Its function is as follows. Inhibits the mitochondrial pyruvate dehydrogenase complex by phosphorylation of the E1 alpha subunit (PDA1), thus contributing to the regulation of glucose metabolism. Also involved in telomere maintenance. The protein is [Pyruvate dehydrogenase (acetyl-transferring)] kinase 1, mitochondrial of Saccharomyces cerevisiae (strain ATCC 204508 / S288c) (Baker's yeast).